Reading from the N-terminus, the 699-residue chain is Cell pattern formation-associated protein StuA (699 aa).

2 disordered regions span residues M1 to P20 and T31 to H97. The segment covering P32–S49 has biased composition (low complexity). Polar residues predominate over residues N52 to P61. Over residues E75–E84 the composition is skewed to acidic residues. Residues R226–P332 enclose the HTH APSES-type domain. Positions G260 to E281 form a DNA-binding region, H-T-H motif. Disordered regions lie at residues A372–M594, R599–N618, and P674–G699. Over residues G376–G423 the composition is skewed to polar residues. 2 stretches are compositionally biased toward basic and acidic residues: residues R428–R438 and G478–R491. The segment covering N520 to D529 has biased composition (polar residues). Basic and acidic residues predominate over residues R535–R545. A compositionally biased stretch (polar residues) spans T566–M594. Positions T669–Q695 are nuclear localization domain.

It belongs to the EFG1/PHD1/stuA family.

It is found in the nucleus. Its function is as follows. Transcription factor that regulates asexual reproduction. Binds the StuA-response elements (StRE) with the consensus sequence 5'-(A/T)CGCG(T/A)N(A/C)-3' at the promoters of target genes. Controls the expression of the gene clusters involved in the production of deoxynivalenol (DON) and 15-acetyldeoxynivalenol (15ADON). Regulates the expression of genes involved in chitin and glucan metabolism. Also controls catalase activity and cell surface hydrophobicity. Plays an important role in pathogenicity. The sequence is that of Cell pattern formation-associated protein StuA from Gibberella zeae (strain ATCC MYA-4620 / CBS 123657 / FGSC 9075 / NRRL 31084 / PH-1) (Wheat head blight fungus).